The following is a 436-amino-acid chain: MAQQAIVTMSALRRTMEVSDSGDVSIDISAEDSNDSFHLEESVDDCMDDCKPNNRPNPISMKPAKRRVFMVPKRERSKTPVQHTSPLNRLYPNVVLGKQHGYKQRPAPSARSRRPQPYSARKDSAAKPQSTPSNQNPLTELLKNVDPAIASRITEMRIPRSMLRTPSGQPFAHWLMPSAEDSSKFINVNPVNMEVEEHVNVVVRRCTEWALISSRLQDKSISTKYLAENFYDLRDFAQRSINKSAWINLRREAIANAGFVNLCAFADEMMMWLQLNLNNQGSWKACREDIILTGAPDMCFHALQKVRAFIKCFLRERHQRALVNALCHIICFEGGIKQAATLCQELFFDFKVGLMVLYFLTPYAFLYSHTIPQCNFGGYFSKCVAQYTPGAVTGLLNSAIEDHYKDCTSQDCTNLITAIVSPETSNKGLLFFPLPM.

Residues 71–140 form a disordered region; sequence VPKRERSKTP…TPSNQNPLTE (70 aa). The span at 104–119 shows a compositional bias: low complexity; that stretch reads QRPAPSARSRRPQPYS. Over residues 127–138 the composition is skewed to polar residues; that stretch reads KPQSTPSNQNPL.

This sequence belongs to the herpesviridae UL69 family.

It is found in the host nucleus. The protein resides in the host cytoplasm. Acts at a post-transcriptional level to regulate viral gene expression. In Alcelaphine herpesvirus 1 (strain C500) (AlHV-1), this protein is Immediate-early phosphoprotein 57 (57).